The following is a 331-amino-acid chain: Holliday junction branch migration complex subunit RuvB (331 aa).

The large ATPase domain (RuvB-L) stretch occupies residues 4–182; it reads KDILQSSECI…FGIPMHLEFY (179 aa). ATP-binding positions include Arg22, Gly63, Lys66, Thr67, Thr68, 129–131, Arg172, Tyr182, and Arg219; that span reads EDF. Thr67 lines the Mg(2+) pocket. Residues 183-253 form a small ATPAse domain (RuvB-S) region; it reads STEELTKVIK…FADQALLRLG (71 aa). Residues 256–331 form a head domain (RuvB-H) region; the sequence is KLGLDRQDIK…SYLNEQTYNM (76 aa). Arg309 and Arg314 together coordinate DNA.

It belongs to the RuvB family. In terms of assembly, homohexamer. Forms an RuvA(8)-RuvB(12)-Holliday junction (HJ) complex. HJ DNA is sandwiched between 2 RuvA tetramers; dsDNA enters through RuvA and exits via RuvB. An RuvB hexamer assembles on each DNA strand where it exits the tetramer. Each RuvB hexamer is contacted by two RuvA subunits (via domain III) on 2 adjacent RuvB subunits; this complex drives branch migration. In the full resolvosome a probable DNA-RuvA(4)-RuvB(12)-RuvC(2) complex forms which resolves the HJ.

The protein localises to the cytoplasm. The catalysed reaction is ATP + H2O = ADP + phosphate + H(+). Its function is as follows. The RuvA-RuvB-RuvC complex processes Holliday junction (HJ) DNA during genetic recombination and DNA repair, while the RuvA-RuvB complex plays an important role in the rescue of blocked DNA replication forks via replication fork reversal (RFR). RuvA specifically binds to HJ cruciform DNA, conferring on it an open structure. The RuvB hexamer acts as an ATP-dependent pump, pulling dsDNA into and through the RuvAB complex. RuvB forms 2 homohexamers on either side of HJ DNA bound by 1 or 2 RuvA tetramers; 4 subunits per hexamer contact DNA at a time. Coordinated motions by a converter formed by DNA-disengaged RuvB subunits stimulates ATP hydrolysis and nucleotide exchange. Immobilization of the converter enables RuvB to convert the ATP-contained energy into a lever motion, pulling 2 nucleotides of DNA out of the RuvA tetramer per ATP hydrolyzed, thus driving DNA branch migration. The RuvB motors rotate together with the DNA substrate, which together with the progressing nucleotide cycle form the mechanistic basis for DNA recombination by continuous HJ branch migration. Branch migration allows RuvC to scan DNA until it finds its consensus sequence, where it cleaves and resolves cruciform DNA. The protein is Holliday junction branch migration complex subunit RuvB of Ehrlichia ruminantium (strain Gardel).